A 180-amino-acid chain; its full sequence is Type-1 fimbrial protein, C chain (180 aa).

A signal peptide spans Met1–Ser23. A disulfide bridge connects residues Cys44 and Cys84.

It belongs to the fimbrial protein family.

It localises to the fimbrium. Functionally, fimbriae (also called pili), polar filaments radiating from the surface of the bacterium to a length of 0.5-1.5 micrometers and numbering 100-300 per cell, enable bacteria to colonize the epithelium of specific host organs. In Escherichia coli O6:H1 (strain CFT073 / ATCC 700928 / UPEC), this protein is Type-1 fimbrial protein, C chain (pilC).